A 103-amino-acid polypeptide reads, in one-letter code: Putative glutaredoxin-C14 (103 aa).

The 102-residue stretch at 1–102 (MDRVMKLASE…PMLKNAGALW (102 aa)) folds into the Glutaredoxin domain. A disulfide bridge connects residues C21 and C24. A Responsive for interaction with TGA factors motif is present at residues 100-103 (ALWL).

The protein belongs to the glutaredoxin family. CC-type subfamily.

The protein resides in the cytoplasm. It is found in the nucleus. Functionally, has a glutathione-disulfide oxidoreductase activity in the presence of NADPH and glutathione reductase. Reduces low molecular weight disulfides and proteins. This chain is Putative glutaredoxin-C14 (GRXC14), found in Oryza sativa subsp. japonica (Rice).